A 545-amino-acid chain; its full sequence is Baeyer-Villiger monooxygenase (545 aa).

Positions 24, 45, 54, 65, 71, and 118 each coordinate FAD.

This sequence belongs to the FAD-binding monooxygenase family. The cofactor is FAD.

Catalyzes a Baeyer-Villiger oxidation reaction, i.e. the insertion of an oxygen atom into a carbon-carbon bond adjacent to a carbonyl, which converts ketones to esters or lactones using NADPH as an electron donor. Besides cycloalkanones, can use cyclic alpha,beta-unsaturated ketones as substrates, leading to conjugated ene-lactones. Can also act on methylated cycloalkanones and methylated cycloalkenones with high enantioselectivity in some cases. The chain is Baeyer-Villiger monooxygenase from Pseudooceanicola batsensis (strain ATCC BAA-863 / DSM 15984 / KCTC 12145 / HTCC2597) (Oceanicola batsensis).